The chain runs to 145 residues: Large ribosomal subunit protein bL17 (145 aa).

This sequence belongs to the bacterial ribosomal protein bL17 family. As to quaternary structure, part of the 50S ribosomal subunit. Contacts protein L32.

The sequence is that of Large ribosomal subunit protein bL17 from Orientia tsutsugamushi (strain Ikeda) (Rickettsia tsutsugamushi).